A 325-amino-acid chain; its full sequence is Putative aryl-alcohol dehydrogenase C750.01 (325 aa).

It belongs to the aldo/keto reductase family. Aldo/keto reductase 2 subfamily.

The polypeptide is Putative aryl-alcohol dehydrogenase C750.01 (Schizosaccharomyces pombe (strain 972 / ATCC 24843) (Fission yeast)).